The following is a 157-amino-acid chain: uncharacterized protein (157 aa).

The stretch at 36 to 63 forms a coiled coil; that stretch reads QIEELNELCQFFNISLTYTRESLEELEN.

This is an uncharacterized protein from Bacillus subtilis (strain 168).